Consider the following 177-residue polypeptide: Ribosome maturation factor RimM (177 aa).

One can recognise a PRC barrel domain in the interval 104 to 176 (DGEYYFFEIL…KIIVNMPEWL (73 aa)).

The protein belongs to the RimM family. As to quaternary structure, binds ribosomal protein uS19.

It localises to the cytoplasm. Functionally, an accessory protein needed during the final step in the assembly of 30S ribosomal subunit, possibly for assembly of the head region. Essential for efficient processing of 16S rRNA. May be needed both before and after RbfA during the maturation of 16S rRNA. It has affinity for free ribosomal 30S subunits but not for 70S ribosomes. The polypeptide is Ribosome maturation factor RimM (Fervidobacterium nodosum (strain ATCC 35602 / DSM 5306 / Rt17-B1)).